Consider the following 665-residue polypeptide: tRNA 5-methylaminomethyl-2-thiouridine biosynthesis bifunctional protein MnmC (665 aa).

The tRNA (mnm(5)s(2)U34)-methyltransferase stretch occupies residues 1-235 (MTITRHAQID…KWEVLRGTFI (235 aa)). The tract at residues 266–665 (IGAGLAGCAT…RGKGKQTVGH (400 aa)) is FAD-dependent cmnm(5)s(2)U34 oxidoreductase.

The protein in the N-terminal section; belongs to the methyltransferase superfamily. tRNA (mnm(5)s(2)U34)-methyltransferase family. It in the C-terminal section; belongs to the DAO family. The cofactor is FAD.

Its subcellular location is the cytoplasm. It catalyses the reaction 5-aminomethyl-2-thiouridine(34) in tRNA + S-adenosyl-L-methionine = 5-methylaminomethyl-2-thiouridine(34) in tRNA + S-adenosyl-L-homocysteine + H(+). In terms of biological role, catalyzes the last two steps in the biosynthesis of 5-methylaminomethyl-2-thiouridine (mnm(5)s(2)U) at the wobble position (U34) in tRNA. Catalyzes the FAD-dependent demodification of cmnm(5)s(2)U34 to nm(5)s(2)U34, followed by the transfer of a methyl group from S-adenosyl-L-methionine to nm(5)s(2)U34, to form mnm(5)s(2)U34. The chain is tRNA 5-methylaminomethyl-2-thiouridine biosynthesis bifunctional protein MnmC from Pseudomonas syringae pv. syringae (strain B728a).